The sequence spans 362 residues: Terpene synthase 3 (362 aa).

The short motif at 90–95 is the DDxx(x)D/E motif element; the sequence is DDFLER. The NDxxSxxxD/E motif signature appears at 239 to 247; it reads NDCVSYAKE.

The protein belongs to the terpene synthase family.

The enzyme catalyses (2E,6E)-farnesyl diphosphate = beta-maaliene + diphosphate. The catalysed reaction is (2E,6E)-farnesyl diphosphate = aristolene + diphosphate. It catalyses the reaction (2E,6E)-farnesyl diphosphate = calarene + diphosphate. It carries out the reaction (2E)-geranyl diphosphate = (E)-beta-ocimene + diphosphate. The enzyme catalyses (2E)-geranyl diphosphate = (Z)-beta-ocimene + diphosphate. The catalysed reaction is (2E)-geranyl diphosphate + H2O = linalool + diphosphate. It catalyses the reaction (2E)-geranyl diphosphate = beta-myrcene + diphosphate. Functionally, terpene synthase that converts its substrate farnesyl diphosphate (FPP) into an unidentified sesquiterpene as a major product, as well as beta-maaliene, aristolene, calarene and 2 additional unidentified sesquiterpene as minor products. Is also able to convert geranyl diphosphate (GPP) into a mixture of monoterpenes including (Z)-beta-ocimene, (E)-beta-ocimene, allo-ocimene, linalool and beta-myrcene. The sequence is that of Terpene synthase 3 from Dictyostelium discoideum (Social amoeba).